We begin with the raw amino-acid sequence, 64 residues long: MREIKIVLPELEDVVPEEFLEHMLKATKEILLAMRTLIDSGLDKIEAVEEITKAKKEIKKIEVE.

This is an uncharacterized protein from Archaeoglobus fulgidus (strain ATCC 49558 / DSM 4304 / JCM 9628 / NBRC 100126 / VC-16).